A 173-amino-acid chain; its full sequence is Trafficking regulator of GLUT4 1 (173 aa).

Residues 1–10 (MANPAQPPLQ) show a composition bias toward pro residues. Positions 1–20 (MANPAQPPLQDPGSTSPLEL) are disordered. Over 1–102 (MANPAQPPLQ…QDQEAPKDYL (102 aa)) the chain is Cytoplasmic. Serine 16, serine 43, serine 45, serine 70, serine 84, and serine 85 each carry phosphoserine. Residues 103-123 (VLAIASCFCPVWPLNLIPLIF) constitute an intramembrane region (helical). Topologically, residues 124 to 150 (SIMSRSSVQQGDLDGARRLGRLARLLS) are cytoplasmic. The chain crosses the membrane as a helical span at residues 151–171 (ITFIILGIVIIIVAVTVNFTV). The Extracellular segment spans residues 172–173 (PK).

Belongs to the CD225/Dispanin family. Interacts with SLC2A4; the interaction is required for proper SLC2A4 reacycling after insulin stimulation. As to expression, expressed specifically in white and brown adipose tissues.

It localises to the cell membrane. The protein resides in the endomembrane system. Its subcellular location is the cytoplasm. The protein localises to the perinuclear region. Functionally, regulates insulin-mediated adipose tissue glucose uptake and transport by modulation of SLC2A4 recycling. Not required for SLC2A4 membrane fusion upon an initial stimulus, but rather is necessary for proper protein recycling during prolonged insulin stimulation. In Mus musculus (Mouse), this protein is Trafficking regulator of GLUT4 1 (Trarg1).